The chain runs to 166 residues: Large ribosomal subunit protein eL14 (166 aa).

Residues 135–166 form a disordered region; it reads KADGTPRVLKKDRRERLRAEKAKGGKKAAAKK. Positions 146 to 157 are enriched in basic and acidic residues; the sequence is DRRERLRAEKAK.

This sequence belongs to the eukaryotic ribosomal protein eL14 family.

This Drosophila melanogaster (Fruit fly) protein is Large ribosomal subunit protein eL14 (RpL14).